The primary structure comprises 386 residues: Patatin (386 aa).

Residues 1–23 (MATTKSFLILFFMILATTSSTCA) form the signal peptide. The PNPLA domain occupies 32–229 (LSIDGGGIKG…TVGDPALLSL (198 aa)). The GXGXXG signature appears at 36–41 (GGGIKG). Positions 75–79 (GTSTG) match the GXSXG motif. S77 serves as the catalytic Nucleophile. N-linked (GlcNAc...) asparagine glycosylation occurs at N115. D215 serves as the catalytic Proton acceptor. Positions 215–217 (DGA) match the DGA/G motif.

This sequence belongs to the patatin family.

It localises to the vacuole. Its function is as follows. Probable lipolytic acyl hydrolase (LAH), an activity which is thought to be involved in the response of tubers to pathogens. The chain is Patatin from Solanum tuberosum (Potato).